Here is a 412-residue protein sequence, read N- to C-terminus: tRNA N6-adenosine threonylcarbamoyltransferase, mitochondrial (412 aa).

Residues 1–78 (MLCLVYNSIL…IICLNTHRTI (78 aa)) constitute a mitochondrion transit peptide. Residues H157 and H161 each contribute to the a divalent metal cation site. Substrate contacts are provided by residues 179–183 (LVSGG), D212, A228, E232, 328–329 (RN), and S363. Position 364 (D364) interacts with a divalent metal cation.

The protein belongs to the KAE1 / TsaD family. Homodimer. Requires a divalent metal cation as cofactor.

It is found in the mitochondrion. It catalyses the reaction L-threonylcarbamoyladenylate + adenosine(37) in tRNA = N(6)-L-threonylcarbamoyladenosine(37) in tRNA + AMP + H(+). In terms of biological role, required for the formation of a threonylcarbamoyl group on adenosine at position 37 (t(6)A37) in mitochondrial tRNAs that read codons beginning with adenine. Probably involved in the transfer of the threonylcarbamoyl moiety of threonylcarbamoyl-AMP (TC-AMP) to the N6 group of A37. Involved in mitochondrial genome maintenance. This Schizosaccharomyces pombe (strain 972 / ATCC 24843) (Fission yeast) protein is tRNA N6-adenosine threonylcarbamoyltransferase, mitochondrial (pgp1).